Consider the following 267-residue polypeptide: Small ribosomal subunit protein uS3 (267 aa).

The 69-residue stretch at 43 to 111 (IRKEMSKDLE…QVQLNIFEVK (69 aa)) folds into the KH type-2 domain. A disordered region spans residues 216-267 (FEEQQAQQNNRPGRRGGDRRPRRGNRSAAPQAAEAPKAEAPAEAAPAAETKE). A compositionally biased stretch (low complexity) spans 241-267 (RSAAPQAAEAPKAEAPAEAAPAAETKE).

This sequence belongs to the universal ribosomal protein uS3 family. Part of the 30S ribosomal subunit. Forms a tight complex with proteins S10 and S14.

Its function is as follows. Binds the lower part of the 30S subunit head. Binds mRNA in the 70S ribosome, positioning it for translation. This chain is Small ribosomal subunit protein uS3, found in Bifidobacterium longum (strain DJO10A).